The chain runs to 44 residues: U2-agatoxin-Ao1s (44 aa).

The propeptide occupies 1 to 9 (KKVYSFLKL). Intrachain disulfides connect C12/C28, C19/C33, and C27/C43.

It belongs to the neurotoxin 01 (U2-agtx) family. In terms of tissue distribution, expressed by the venom gland.

The protein localises to the secreted. Functionally, insect active toxin causing rapid but reversible paralysis in crickets. No activity shown in mammals. Does not show effect on mammalian voltage-gated calcium channels. The chain is U2-agatoxin-Ao1s from Agelena orientalis (Funnel-web spider).